A 201-amino-acid chain; its full sequence is Bradykinin potentiating and C-type natriuretic peptides (201 aa).

The N-terminal stretch at 1-23 (MFVSRLAASGLLLLALLAVSLDG) is a signal peptide. A propeptide spanning residues 24–47 (KPVQQWSQNWPGPKVPPLVVQQWS) is cleaved from the precursor. Gln-48 is subject to Pyrrolidone carboxylic acid. A propeptide spanning residues 58–60 (LVV) is cleaved from the precursor. Gln-61 carries the pyrrolidone carboxylic acid modification. 2 consecutive propeptides follow at residues 67–95 (TQLQ…AALD) and 107–179 (GSKA…LAKK). Residues 90 to 172 (PDAALDTPPA…GGGGGGGARR (83 aa)) form a disordered region. Residues 120-130 (SKGASATSTAS) are compositionally biased toward low complexity. Residues 132–142 (PMRDLRTDGKQ) show a composition bias toward basic and acidic residues. The segment covering 159–170 (PGGGGGGGGGGA) has biased composition (gly residues). A disulfide bridge connects residues Cys-185 and Cys-201.

It in the N-terminal section; belongs to the bradykinin-potentiating peptide family. This sequence in the central section; belongs to the bradykinin inhibitor peptide family. In the C-terminal section; belongs to the natriuretic peptide family. Venom gland.

The protein localises to the secreted. In terms of biological role, inhibits the activity of the angiotensin-converting enzyme (ACE) by a preferential interaction with its C-domain. May also potentiate the hypotensive effects of bradykinin. Its function is as follows. Antagonizes the vasodilatory actions of bradykinin at the B2 bradykinin receptor. Functionally, has a vasorelaxant activity in rat aortic strips and a diuretic potency in anesthetized rats. May act by activating natriuretic receptors (NPR1 and/or NPR2). The sequence is that of Bradykinin potentiating and C-type natriuretic peptides from Sistrurus catenatus edwardsii (Desert massasauga).